A 194-amino-acid polypeptide reads, in one-letter code: dCTP deaminase (194 aa).

Residues 110 to 115 (RSSLAR), Asp128, 136 to 138 (VLE), Tyr171, Lys178, and Gln182 each bind dCTP. The active-site Proton donor/acceptor is Glu138.

Belongs to the dCTP deaminase family. As to quaternary structure, homotrimer.

It catalyses the reaction dCTP + H2O + H(+) = dUTP + NH4(+). It participates in pyrimidine metabolism; dUMP biosynthesis; dUMP from dCTP (dUTP route): step 1/2. Its function is as follows. Catalyzes the deamination of dCTP to dUTP. This chain is dCTP deaminase, found in Pseudoalteromonas translucida (strain TAC 125).